Reading from the N-terminus, the 60-residue chain is DNA-directed RNA polymerase subunit Rpo6 (60 aa).

It belongs to the archaeal Rpo6/eukaryotic RPB6 RNA polymerase subunit family. In terms of assembly, part of the RNA polymerase complex.

The protein localises to the cytoplasm. The enzyme catalyses RNA(n) + a ribonucleoside 5'-triphosphate = RNA(n+1) + diphosphate. Its function is as follows. DNA-dependent RNA polymerase (RNAP) catalyzes the transcription of DNA into RNA using the four ribonucleoside triphosphates as substrates. The sequence is that of DNA-directed RNA polymerase subunit Rpo6 from Methanothrix thermoacetophila (strain DSM 6194 / JCM 14653 / NBRC 101360 / PT) (Methanosaeta thermophila).